The chain runs to 234 residues: Phosphoribosylaminoimidazole-succinocarboxamide synthase (234 aa).

It belongs to the SAICAR synthetase family.

The catalysed reaction is 5-amino-1-(5-phospho-D-ribosyl)imidazole-4-carboxylate + L-aspartate + ATP = (2S)-2-[5-amino-1-(5-phospho-beta-D-ribosyl)imidazole-4-carboxamido]succinate + ADP + phosphate + 2 H(+). It participates in purine metabolism; IMP biosynthesis via de novo pathway; 5-amino-1-(5-phospho-D-ribosyl)imidazole-4-carboxamide from 5-amino-1-(5-phospho-D-ribosyl)imidazole-4-carboxylate: step 1/2. The sequence is that of Phosphoribosylaminoimidazole-succinocarboxamide synthase from Streptococcus pyogenes serotype M1.